A 171-amino-acid polypeptide reads, in one-letter code: UPF0763 protein HPSH_03535 (171 aa).

The protein belongs to the UPF0763 family.

This is UPF0763 protein HPSH_03535 from Helicobacter pylori (strain Shi470).